The sequence spans 193 residues: Ubiquitin-conjugating enzyme E2 E1 (193 aa).

The disordered stretch occupies residues 1–45 (MSDDDSRASTSSSSSSSSNQQTEKETNTPKKKESKVSMSKNSKLL). N-acetylserine is present on Ser-2. Residues 8-18 (ASTSSSSSSSS) are compositionally biased toward low complexity. The segment covering 22 to 35 (TEKETNTPKKKESK) has biased composition (basic and acidic residues). Polar residues predominate over residues 36-45 (VSMSKNSKLL). In terms of domain architecture, UBC core spans 47 to 193 (TSAKRIQKEL…ARQWTKRYAT (147 aa)). The Glycyl thioester intermediate role is filled by Cys-131. Lys-136 is covalently cross-linked (Glycyl lysine isopeptide (Lys-Gly) (interchain with G-Cter in ISG15)).

Belongs to the ubiquitin-conjugating enzyme family. As to quaternary structure, interacts with RNF14. Post-translationally, ISGylation suppresses ubiquitin E2 enzyme activity. Autoubiquitinated in vitro.

Its subcellular location is the nucleus. It carries out the reaction S-ubiquitinyl-[E1 ubiquitin-activating enzyme]-L-cysteine + [E2 ubiquitin-conjugating enzyme]-L-cysteine = [E1 ubiquitin-activating enzyme]-L-cysteine + S-ubiquitinyl-[E2 ubiquitin-conjugating enzyme]-L-cysteine.. The enzyme catalyses S-ubiquitinyl-[E1 ubiquitin-activating enzyme]-L-cysteine + [acceptor protein]-L-lysine = [E1 ubiquitin-activating enzyme]-L-cysteine + N(6)-monoubiquitinyl-[acceptor protein]-L-lysine.. Its pathway is protein modification; protein ubiquitination. Accepts ubiquitin from the E1 complex and catalyzes its covalent attachment to other proteins. Catalyzes the covalent attachment of ISG15 to other proteins. Mediates the selective degradation of short-lived and abnormal proteins. In vitro also catalyzes 'Lys-48'-linked polyubiquitination. Catalyzes monoubiquitination of other proteins in both an E3-dependent and E3-independent manner. The sequence is that of Ubiquitin-conjugating enzyme E2 E1 from Homo sapiens (Human).